Consider the following 136-residue polypeptide: ATP synthase epsilon chain, plastid (136 aa).

It belongs to the ATPase epsilon chain family. F-type ATPases have 2 components, CF(1) - the catalytic core - and CF(0) - the membrane proton channel. CF(1) has five subunits: alpha(3), beta(3), gamma(1), delta(1), epsilon(1). CF(0) has three main subunits: a, b and c.

The protein localises to the plastid thylakoid membrane. In terms of biological role, produces ATP from ADP in the presence of a proton gradient across the membrane. In Cuscuta reflexa (Southern Asian dodder), this protein is ATP synthase epsilon chain, plastid.